Consider the following 343-residue polypeptide: Ubiquitin carboxyl-terminal hydrolase isozyme L5 (343 aa).

In terms of domain architecture, UCH catalytic spans 6–218; the sequence is GWCTIESDPG…IRFNLMAVIK (213 aa). Residue Cys-83 is the Nucleophile of the active site. The Proton donor role is filled by His-157. The interval 242–266 is disordered; the sequence is LSELNSGSGGDNKEESGGATPTTKE. Positions 306 to 334 constitute a ULD domain; it reads NFTPLILNLIKGLAEKDNLQPLIQKAKDQ.

Belongs to the peptidase C12 family. In terms of assembly, component of the 19S (PA700) regulatory complex of the 26S proteasome.

It localises to the cytoplasm. The protein resides in the nucleus. The catalysed reaction is Thiol-dependent hydrolysis of ester, thioester, amide, peptide and isopeptide bonds formed by the C-terminal Gly of ubiquitin (a 76-residue protein attached to proteins as an intracellular targeting signal).. Its function is as follows. Protease that specifically cleaves 'Lys-48'-linked polyubiquitin chains. Deubiquitinating enzyme associated with the 19S regulatory subunit of the 26S proteasome. The polypeptide is Ubiquitin carboxyl-terminal hydrolase isozyme L5 (uch2) (Dictyostelium discoideum (Social amoeba)).